The primary structure comprises 87 residues: MKTKLNELLEFPCSFTYKVMGLAEPELVNQVVEVVQRHAPGDYSPQVKPSSKGNYHSVSITINATHIEQVETLYEELGNLELVRVVL.

The protein belongs to the UPF0250 family.

The polypeptide is UPF0250 protein plu1293 (Photorhabdus laumondii subsp. laumondii (strain DSM 15139 / CIP 105565 / TT01) (Photorhabdus luminescens subsp. laumondii)).